The following is a 240-amino-acid chain: DNA repair protein RecO (240 aa).

It belongs to the RecO family.

Involved in DNA repair and RecF pathway recombination. This is DNA repair protein RecO from Pseudoalteromonas atlantica (strain T6c / ATCC BAA-1087).